Reading from the N-terminus, the 666-residue chain is Putative cysteine-rich receptor-like protein kinase 31 (666 aa).

A signal peptide spans 1–23 (MCLNTLCAILCFVLTVSFGFVSA). 2 Gnk2-homologous domains span residues 24 to 130 (QKCG…NNSF) and 136 to 245 (LEPT…GYKY). The Extracellular segment spans residues 24-280 (QKCGESVFFR…PDGKKISTGV (257 aa)). 5 N-linked (GlcNAc...) asparagine glycosylation sites follow: N52, N62, N104, N127, and N151. The helical transmembrane segment at 281–301 (IVAIVVSAVIFVVLVALGLVI) threads the bilayer. At 302 to 666 (WKRRQSYKTL…SASITRATPR (365 aa)) the chain is on the cytoplasmic side. The Protein kinase domain maps to 339–616 (FSRNNKLGQG…IFQMLTNSSI (278 aa)). Residues 345 to 353 (LGQGGFGEV) and K367 each bind ATP. Position 412 is a phosphotyrosine (Y412). D464 (proton acceptor) is an active-site residue. Residue S468 is modified to Phosphoserine. T504 carries the post-translational modification Phosphothreonine. Position 512 is a phosphotyrosine (Y512).

Belongs to the protein kinase superfamily. Ser/Thr protein kinase family. CRK subfamily.

The protein localises to the membrane. It catalyses the reaction L-seryl-[protein] + ATP = O-phospho-L-seryl-[protein] + ADP + H(+). The catalysed reaction is L-threonyl-[protein] + ATP = O-phospho-L-threonyl-[protein] + ADP + H(+). The sequence is that of Putative cysteine-rich receptor-like protein kinase 31 (CRK31) from Arabidopsis thaliana (Mouse-ear cress).